A 218-amino-acid polypeptide reads, in one-letter code: Putative inactive cathepsin L-like protein CTSL3P (218 aa).

Disordered regions lie at residues 144–173 (GDWK…EVAQ) and 195–218 (GDED…EAQV). The segment covering 201-212 (EDKWPHDMRNHL) has biased composition (basic and acidic residues).

It belongs to the peptidase C1 family.

The chain is Putative inactive cathepsin L-like protein CTSL3P (CTSL3P) from Homo sapiens (Human).